A 1400-amino-acid chain; its full sequence is DNA-directed RNA polymerase subunit beta' (1400 aa).

Positions 71, 73, 86, and 89 each coordinate Zn(2+). Residues Asp462, Asp464, and Asp466 each coordinate Mg(2+). The Zn(2+) site is built by Cys810, Cys884, Cys891, and Cys894.

This sequence belongs to the RNA polymerase beta' chain family. The RNAP catalytic core consists of 2 alpha, 1 beta, 1 beta' and 1 omega subunit. When a sigma factor is associated with the core the holoenzyme is formed, which can initiate transcription. Requires Mg(2+) as cofactor. Zn(2+) is required as a cofactor.

It carries out the reaction RNA(n) + a ribonucleoside 5'-triphosphate = RNA(n+1) + diphosphate. In terms of biological role, DNA-dependent RNA polymerase catalyzes the transcription of DNA into RNA using the four ribonucleoside triphosphates as substrates. In Rhodopseudomonas palustris (strain TIE-1), this protein is DNA-directed RNA polymerase subunit beta'.